An 87-amino-acid chain; its full sequence is MKFQPLGKRVLIEREEESNKTASGIIIPDNASKEKPSTGKIVEVGTECDCVKAGDKVAFAKYSGSELTLGDKKYLILNLEDVLGIIK.

The protein belongs to the GroES chaperonin family. In terms of assembly, heptamer of 7 subunits arranged in a ring. Interacts with the chaperonin GroEL.

The protein localises to the cytoplasm. Together with the chaperonin GroEL, plays an essential role in assisting protein folding. The GroEL-GroES system forms a nano-cage that allows encapsulation of the non-native substrate proteins and provides a physical environment optimized to promote and accelerate protein folding. GroES binds to the apical surface of the GroEL ring, thereby capping the opening of the GroEL channel. This is Co-chaperonin GroES from Campylobacter hominis (strain ATCC BAA-381 / DSM 21671 / CCUG 45161 / LMG 19568 / NCTC 13146 / CH001A).